The chain runs to 294 residues: Bifunctional protein FolD (294 aa).

Residues 166 to 168 (GRS), Ser-195, and Ile-236 contribute to the NADP(+) site.

The protein belongs to the tetrahydrofolate dehydrogenase/cyclohydrolase family. As to quaternary structure, homodimer.

The catalysed reaction is (6R)-5,10-methylene-5,6,7,8-tetrahydrofolate + NADP(+) = (6R)-5,10-methenyltetrahydrofolate + NADPH. It catalyses the reaction (6R)-5,10-methenyltetrahydrofolate + H2O = (6R)-10-formyltetrahydrofolate + H(+). Its pathway is one-carbon metabolism; tetrahydrofolate interconversion. Its function is as follows. Catalyzes the oxidation of 5,10-methylenetetrahydrofolate to 5,10-methenyltetrahydrofolate and then the hydrolysis of 5,10-methenyltetrahydrofolate to 10-formyltetrahydrofolate. The sequence is that of Bifunctional protein FolD from Chloroherpeton thalassium (strain ATCC 35110 / GB-78).